Reading from the N-terminus, the 432-residue chain is 3-phosphoshikimate 1-carboxyvinyltransferase (432 aa).

3-phosphoshikimate is bound by residues K23, S24, and R28. K23 is a phosphoenolpyruvate binding site. Residues G95 and R123 each coordinate phosphoenolpyruvate. Residues S167, Q169, D317, and K344 each coordinate 3-phosphoshikimate. Q169 serves as a coordination point for phosphoenolpyruvate. D317 serves as the catalytic Proton acceptor. The phosphoenolpyruvate site is built by R348 and R390.

The protein belongs to the EPSP synthase family. As to quaternary structure, monomer.

Its subcellular location is the cytoplasm. The catalysed reaction is 3-phosphoshikimate + phosphoenolpyruvate = 5-O-(1-carboxyvinyl)-3-phosphoshikimate + phosphate. Its pathway is metabolic intermediate biosynthesis; chorismate biosynthesis; chorismate from D-erythrose 4-phosphate and phosphoenolpyruvate: step 6/7. In terms of biological role, catalyzes the transfer of the enolpyruvyl moiety of phosphoenolpyruvate (PEP) to the 5-hydroxyl of shikimate-3-phosphate (S3P) to produce enolpyruvyl shikimate-3-phosphate and inorganic phosphate. The sequence is that of 3-phosphoshikimate 1-carboxyvinyltransferase from Staphylococcus aureus (strain COL).